A 265-amino-acid polypeptide reads, in one-letter code: Tryptophan synthase alpha chain (265 aa).

Active-site proton acceptor residues include Glu49 and Glu60.

It belongs to the TrpA family. Tetramer of two alpha and two beta chains.

It carries out the reaction (1S,2R)-1-C-(indol-3-yl)glycerol 3-phosphate + L-serine = D-glyceraldehyde 3-phosphate + L-tryptophan + H2O. The protein operates within amino-acid biosynthesis; L-tryptophan biosynthesis; L-tryptophan from chorismate: step 5/5. In terms of biological role, the alpha subunit is responsible for the aldol cleavage of indoleglycerol phosphate to indole and glyceraldehyde 3-phosphate. The protein is Tryptophan synthase alpha chain of Janthinobacterium sp. (strain Marseille) (Minibacterium massiliensis).